The chain runs to 652 residues: Bifunctional protein ThiO/ThiG (652 aa).

Residues 1 to 366 form a thiO region; it reads MTRDIVIIGG…HYSRSQKQAS (366 aa). Residues 5-19 and 44-46 each bind FAD; these read IVII…AIAV and AGM. Glutamate 52 serves as a coordination point for glycine. An FAD-binding site is contributed by valine 173. Positions 301 and 327 each coordinate glycine. An FAD-binding site is contributed by 325–331; that stretch reads HYRNGIL. The thiG stretch occupies residues 393-652; it reads PLIIAGKSFH…ASSPVTGTIS (260 aa). Lysine 494 serves as the catalytic Schiff-base intermediate with DXP. 1-deoxy-D-xylulose 5-phosphate is bound by residues glycine 555, 581-582, and 603-604; these read AG and NS.

The protein in the N-terminal section; belongs to the DAO family. ThiO subfamily. This sequence in the C-terminal section; belongs to the ThiG family. Interacts with ThiH and ThiS. The cofactor is FAD.

It localises to the cytoplasm. The catalysed reaction is glycine + O2 + H2O = glyoxylate + H2O2 + NH4(+). It catalyses the reaction [ThiS sulfur-carrier protein]-C-terminal-Gly-aminoethanethioate + 2-iminoacetate + 1-deoxy-D-xylulose 5-phosphate = [ThiS sulfur-carrier protein]-C-terminal Gly-Gly + 2-[(2R,5Z)-2-carboxy-4-methylthiazol-5(2H)-ylidene]ethyl phosphate + 2 H2O + H(+). The protein operates within cofactor biosynthesis; thiamine diphosphate biosynthesis. Catalyzes the FAD-dependent oxidative deamination of glycine. Is essential for thiamine biosynthesis since the oxidation of glycine catalyzed by ThiO generates the glycine imine intermediate (dehydroglycine) required for the biosynthesis of the thiazole ring of thiamine pyrophosphate. In terms of biological role, catalyzes the rearrangement of 1-deoxy-D-xylulose 5-phosphate (DXP) to produce the thiazole phosphate moiety of thiamine. Sulfur is provided by the thiocarboxylate moiety of the carrier protein ThiS. In vitro, sulfur can be provided by H(2)S. The polypeptide is Bifunctional protein ThiO/ThiG (thiO/thiG) (Nostoc sp. (strain PCC 7120 / SAG 25.82 / UTEX 2576)).